Consider the following 149-residue polypeptide: MAAYLLAVAILFCIQGWPSGTVQGQAMPFMEVFERSVCQTREMLVSILDEHPDEVAHLFRPSCVTVLRCGGCCTDESLMCTATGKRSVGREIMRVDPRKETSKIEVMQFTEHTECECRPRSGRVNSGKRKRNPEEGGAESQVPLGLTSF.

The first 24 residues, 1-24 (MAAYLLAVAILFCIQGWPSGTVQG), serve as a signal peptide directing secretion. Gln-25 is subject to Pyrrolidone carboxylic acid. Intrachain disulfides connect Cys-38-Cys-80, Cys-69-Cys-115, and Cys-73-Cys-117. Residues 118-149 (RPRSGRVNSGKRKRNPEEGGAESQVPLGLTSF) are disordered.

This sequence belongs to the PDGF/VEGF growth factor family. Snake venom VEGF subfamily. As to quaternary structure, homodimer; disulfide-linked. Interacts with VEGF receptor-1 (FLT1) with a high affinity, whereas it binds to VEGF receptor-2 (KDR) with a low affinity. Does not bind VEGF receptor-3 (FLT4). Expressed by the venom gland.

Its subcellular location is the secreted. Functionally, snake venom VEGFs that may contribute to venom dispersion and prey subjugation by inducing vascular permeability and hypotension. This protein induces an increase in capillary permeability after intradermal injection, as well as a drastic hypotensive effect after intravenous injection. The hypotension is mediated by nitric oxide (NO), which is produced by VEGF-activated endothelium NO synthase. Also induces angiogenesis in vitro. Like other crotalid VEGFs, this protein interacts with VEGF receptor-1 (FLT1) with a high affinity, whereas it binds to VEGF receptor-2 (KDR) with a low affinity. This Sistrurus catenatus edwardsii (Desert massasauga) protein is Snake venom vascular endothelial growth factor toxin 2.